The sequence spans 458 residues: Secretion-regulating guanine nucleotide exchange factor (458 aa).

RCC1 repeat units follow at residues 15 to 67, 68 to 119, 120 to 171, 172 to 230, 231 to 283, 284 to 351, and 352 to 402; these read AALF…VTDG, GDLF…LTEN, GQVL…ATAS, GIVF…LTDA, GEVY…QTET, GKMF…IIGG, and VCYS…LCQL. The segment at 420 to 458 is disordered; it reads DAIEDTESQKAMDKERNWKERQSETSTQSQSDWSRNGGL. Positions 426-442 are enriched in basic and acidic residues; that stretch reads ESQKAMDKERNWKERQS. The residue at position 427 (serine 427) is a Phosphoserine.

Interacts with SEC5. The interaction occurs only in the presence of magnesium or manganese and is stimulated by dCTP or GTP.

The protein localises to the cytoplasm. It localises to the nucleus. Probable guanine nucleotide exchange factor (GEF), which may be involved in the secretion process. This is Secretion-regulating guanine nucleotide exchange factor (SERGEF) from Homo sapiens (Human).